Reading from the N-terminus, the 598-residue chain is Aspartate--tRNA(Asp/Asn) ligase (598 aa).

Glu175 is a binding site for L-aspartate. Residues 199–202 (QQFK) are aspartate. Positions 221 and 452 each coordinate L-aspartate. Position 221 to 223 (221 to 223 (RDE)) interacts with ATP. Residue Glu486 coordinates ATP. Arg493 lines the L-aspartate pocket. 538 to 541 (GVDR) is a binding site for ATP.

This sequence belongs to the class-II aminoacyl-tRNA synthetase family. Type 1 subfamily. Homodimer.

It localises to the cytoplasm. The enzyme catalyses tRNA(Asx) + L-aspartate + ATP = L-aspartyl-tRNA(Asx) + AMP + diphosphate. In terms of biological role, aspartyl-tRNA synthetase with relaxed tRNA specificity since it is able to aspartylate not only its cognate tRNA(Asp) but also tRNA(Asn). Reaction proceeds in two steps: L-aspartate is first activated by ATP to form Asp-AMP and then transferred to the acceptor end of tRNA(Asp/Asn). This is Aspartate--tRNA(Asp/Asn) ligase from Gluconobacter oxydans (strain 621H) (Gluconobacter suboxydans).